The chain runs to 242 residues: Cysteine-rich venom protein VAR11 (242 aa).

The first 19 residues, 1–19 (MILLKLYLTLAAILCQSRG), serve as a signal peptide directing secretion. Positions 41 to 169 (NKHNDLRRTV…SLKYFQVCQY (129 aa)) constitute an SCP domain. Disulfide bonds link Cys77–Cys156, Cys95–Cys170, Cys151–Cys167, Cys189–Cys196, Cys192–Cys201, Cys205–Cys237, Cys214–Cys231, and Cys223–Cys235. One can recognise a ShKT domain in the interval 205 to 237 (CAYNDDYTSCPDLTKQVGCNHPVTANCKASCQC).

The protein belongs to the CRISP family. As to expression, expressed by the venom gland.

Its subcellular location is the secreted. Its function is as follows. Blocks ryanodine receptors, and potassium channels. In Varanus varius (Lace monitor lizard), this protein is Cysteine-rich venom protein VAR11.